The sequence spans 576 residues: Hemagglutinin-neuraminidase (576 aa).

The span at 1–10 shows a compositional bias: basic and acidic residues; it reads MDGDRGKRDS. The tract at residues 1–24 is disordered; that stretch reads MDGDRGKRDSYWSTSPSGSTTKLA. Topologically, residues 1-37 are intravirion; that stretch reads MDGDRGKRDSYWSTSPSGSTTKLASGWERSSKVDTWL. The incorporation in virion stretch occupies residues 10-14; it reads SYWST. The span at 11 to 23 shows a compositional bias: polar residues; sequence YWSTSPSGSTTKL. Residues 38–58 form a helical membrane-spanning segment; that stretch reads LILSFTQWALSIATVIICIII. The segment at 59-140 is involved in interaction with F protein; sequence SARQGYSTKE…RQELTQLCES (82 aa). Over 59 to 576 the chain is Virion surface; the sequence is SARQGYSTKE…SIPKLCKAES (518 aa). N-linked (GlcNAc...) asparagine; by host glycosylation occurs at N77. 4 disulfides stabilise this stretch: C192/C216, C258/C271, C357/C469, and C463/C473. The segment at 254–259 is involved in neuraminidase activity; that stretch reads NRKSCS. N-linked (GlcNAc...) asparagine; by host glycosylation is found at N499 and N511. C536 and C545 form a disulfide bridge.

It belongs to the paramyxoviruses hemagglutinin-neuraminidase family. As to quaternary structure, homotetramer; composed of disulfide-linked homodimers. Interacts with F protein trimer. Post-translationally, N-glycosylated; glycans consist of a mixture of high mannose-type oligosaccharides and of complex-type oligosaccharides.

The protein resides in the virion membrane. It is found in the host cell membrane. The catalysed reaction is Hydrolysis of alpha-(2-&gt;3)-, alpha-(2-&gt;6)-, alpha-(2-&gt;8)- glycosidic linkages of terminal sialic acid residues in oligosaccharides, glycoproteins, glycolipids, colominic acid and synthetic substrates.. Functionally, attaches the virus to sialic acid-containing cell receptors and thereby initiating infection. Binding of HN protein to the receptor induces a conformational change that allows the F protein to trigger virion/cell membranes fusion. In terms of biological role, neuraminidase activity ensures the efficient spread of the virus by dissociating the mature virions from the neuraminic acid containing glycoproteins. This is Hemagglutinin-neuraminidase (HN) from Sendai virus (strain Harris) (SeV).